A 275-amino-acid chain; its full sequence is COP9 signalosome complex subunit 7a (275 aa).

An N-acetylserine modification is found at Ser2. A PCI domain is found at 2-159 (SAEVKVTGQN…QRLEVDYSIG (158 aa)). Residues 185–233 (LSGIEEQVSRANQHKEQQLGLKQQIESEVANLKKTIKVTTAAAAAATSQ) adopt a coiled-coil conformation. The interval 228–275 (AAATSQDPEQHLTELREPASGTNQRQPSKKASKGKGLRGSAKIWSKSN) is disordered. The span at 235-244 (PEQHLTELRE) shows a compositional bias: basic and acidic residues. Residues 254–263 (PSKKASKGKG) show a composition bias toward basic residues.

The protein belongs to the CSN7/EIF3M family. CSN7 subfamily. As to quaternary structure, component of the CSN complex, composed of COPS1/GPS1, COPS2, COPS3, COPS4, COPS5, COPS6, COPS7 (COPS7A or COPS7B), COPS8 and COPS9. In the complex, it probably interacts directly with COPS1, COPS2, COPS4, COPS5, COPS6 and COPS8. Interacts with PMF1. Interacts with the translation initiation factor EIF3S6. Interacts with CK2 and PKD. Interacts directly with ID3. Post-translationally, phosphorylated by CK2 and PKD kinases.

It localises to the cytoplasm. It is found in the nucleus. In terms of biological role, component of the COP9 signalosome complex (CSN), a complex involved in various cellular and developmental processes. The CSN complex is an essential regulator of the ubiquitin (Ubl) conjugation pathway by mediating the deneddylation of the cullin subunits of SCF-type E3 ligase complexes, leading to decrease the Ubl ligase activity of SCF-type complexes such as SCF, CSA or DDB2. The complex is also involved in phosphorylation of p53/TP53, JUN, I-kappa-B-alpha/NFKBIA, ITPK1 and IRF8/ICSBP, possibly via its association with CK2 and PKD kinases. CSN-dependent phosphorylation of TP53 and JUN promotes and protects degradation by the Ubl system, respectively. The sequence is that of COP9 signalosome complex subunit 7a (Cops7a) from Mus musculus (Mouse).